Consider the following 675-residue polypeptide: Vitamin K-dependent protein S (675 aa).

Residues 1–24 (MRVLSVRFRVLLACLALVLPNSET) form the signal peptide. Residues 25 to 41 (NFLSKERASQVLVRKRR) constitute a propeptide that is removed on maturation. The Gla domain occupies 42 to 87 (ANTLLEETKKGNLERECIEELCNKEEAREVFENNPETDYFYPKYLG). 4-carboxyglutamate is present on residues E47, E48, E55, E57, E60, E61, E66, E67, E70, E73, and E77. The cysteines at positions 58 and 63 are disulfide-linked. The thrombin-sensitive stretch occupies residues 88-116 (CLGAFRVGAFSAARQSANAYPDLRSCVNA). The region spanning 117-155 (IPDQCDPMPCNEDGYLSCKDGQGAFTCICKPGWQGDKCQ) is the EGF-like 1 domain. 13 disulfide bridges follow: C121–C134, C126–C143, C145–C154, C161–C175, C171–C184, C186–C199, C205–C217, C212–C226, C228–C241, C247–C256, C252–C265, C267–C282, and C449–C475. D136 carries the (3R)-3-hydroxyaspartate modification. The 44-residue stretch at 157-200 (DINECKDPSNINGGCSQTCDNTPGSYHCSCKIGFAMLTNKKDCK) folds into the EGF-like 2; calcium-binding domain. One can recognise an EGF-like 3; calcium-binding domain in the interval 201–242 (DVDECSLKPSVCGTAVCKNIPGDFECECPNGYRYDPSSKSCK). Residues 243–283 (DVDECSENTCAQLCVNYPGGYSCYCDGKKGFKLAQDQRSCE) form the EGF-like 4; calcium-binding domain. 2 Laminin G-like domains span residues 299–475 (LLYL…NKHC) and 484–665 (YYPG…AHSC). N-linked (GlcNAc...) asparagine glycosylation is found at N499 and N509.

The iron and 2-oxoglutarate dependent 3-hydroxylation of aspartate and asparagine is (R) stereospecific within EGF domains. In terms of tissue distribution, plasma.

Its subcellular location is the secreted. Anticoagulant plasma protein; it is a cofactor to activated protein C in the degradation of coagulation factors Va and VIIIa. It helps to prevent coagulation and stimulating fibrinolysis. This chain is Vitamin K-dependent protein S (Pros1), found in Rattus norvegicus (Rat).